We begin with the raw amino-acid sequence, 581 residues long: Oligo-1,6-glucosidase IMA5 (581 aa).

The active-site Nucleophile is Asp210. The active-site Proton donor is the Glu272.

It belongs to the glycosyl hydrolase 13 family.

The catalysed reaction is Hydrolysis of (1-&gt;6)-alpha-D-glucosidic linkages in some oligosaccharides produced from starch and glycogen by alpha-amylase, and in isomaltose.. Its function is as follows. Alpha-glucosidase with specificity for isomaltose, maltose, and palatinose. The protein is Oligo-1,6-glucosidase IMA5 (IMA5) of Saccharomyces cerevisiae (strain ATCC 204508 / S288c) (Baker's yeast).